We begin with the raw amino-acid sequence, 723 residues long: Enolase-phosphatase E1 (723 aa).

Substrate-binding positions include 126-127 (SS) and Lys160. The disordered stretch occupies residues 239 to 723 (GAGAKRKIDE…TPTPPIEAES (485 aa)). Composition is skewed to basic and acidic residues over residues 262–284 (VKKD…DEPA) and 293–308 (AAKE…KMEV). A compositionally biased stretch (low complexity) spans 311 to 320 (AAAAAAPPAD). Composition is skewed to basic and acidic residues over residues 322–406 (AEEK…VVEE), 419–443 (AEEK…KPAE), 468–479 (EPAKEKPAEAEA), 487–496 (TKAEVVEKPA), 511–565 (SADK…KGEE), and 577–593 (VEAK…KSDA). Low complexity-rich tracts occupy residues 596 to 606 (VSTTTTTTSTE) and 636 to 647 (NGEAEPAAEAVV). Residues 653–666 (GKHEEKGDSDKEND) are compositionally biased toward basic and acidic residues.

This sequence belongs to the HAD-like hydrolase superfamily. MasA/MtnC family. Monomer.

The protein resides in the cytoplasm. The protein localises to the nucleus. The enzyme catalyses 5-methylsulfanyl-2,3-dioxopentyl phosphate + H2O = 1,2-dihydroxy-5-(methylsulfanyl)pent-1-en-3-one + phosphate. The protein operates within amino-acid biosynthesis; L-methionine biosynthesis via salvage pathway; L-methionine from S-methyl-5-thio-alpha-D-ribose 1-phosphate: step 3/6. Its pathway is amino-acid biosynthesis; L-methionine biosynthesis via salvage pathway; L-methionine from S-methyl-5-thio-alpha-D-ribose 1-phosphate: step 4/6. In terms of biological role, bifunctional enzyme that catalyzes the enolization of 2,3-diketo-5-methylthiopentyl-1-phosphate (DK-MTP-1-P) into the intermediate 2-hydroxy-3-keto-5-methylthiopentenyl-1-phosphate (HK-MTPenyl-1-P), which is then dephosphorylated to form the acireductone 1,2-dihydroxy-3-keto-5-methylthiopentene (DHK-MTPene). The protein is Enolase-phosphatase E1 of Culex quinquefasciatus (Southern house mosquito).